Consider the following 224-residue polypeptide: Glutathione S-transferase U28 (224 aa).

A GST N-terminal domain is found at 6 to 85 (SKVVVLDFWA…YIDETWTDAA (80 aa)). Glutathione contacts are provided by residues 16 to 17 (SP), 42 to 43 (NK), 56 to 57 (KV), and 69 to 70 (ES). Positions 91-217 (DPQSRATARF…EKVYQQVLKL (127 aa)) constitute a GST C-terminal domain. Threonine 154 is modified (phosphothreonine).

This sequence belongs to the GST superfamily. Tau family.

The protein localises to the cytoplasm. Its subcellular location is the cytosol. It catalyses the reaction RX + glutathione = an S-substituted glutathione + a halide anion + H(+). Functionally, may be involved in the conjugation of reduced glutathione to a wide number of exogenous and endogenous hydrophobic electrophiles and have a detoxification role against certain herbicides. This chain is Glutathione S-transferase U28 (GSTU28), found in Arabidopsis thaliana (Mouse-ear cress).